A 93-amino-acid chain; its full sequence is MYCSIYKSSKKQGAYLYIEKKDDFSPVPQELMTMFGTPKMVMVVNLEGRKLASVDIEKVEVSLKNDGYFLQLPPPPENLLEKYKQDKAKRNEK.

Positions 1–84 constitute a YcgL domain; it reads MYCSIYKSSK…PPENLLEKYK (84 aa).

This Aliivibrio salmonicida (strain LFI1238) (Vibrio salmonicida (strain LFI1238)) protein is YcgL domain-containing protein VSAL_I1068.